Here is a 271-residue protein sequence, read N- to C-terminus: NADPH-dependent 7-cyano-7-deazaguanine reductase (271 aa).

Position 81-83 (81-83) interacts with substrate; sequence IES. 83-84 lines the NADPH pocket; sequence SK. The Thioimide intermediate role is filled by cysteine 177. Aspartate 184 (proton donor) is an active-site residue. A substrate-binding site is contributed by 216–217; the sequence is HE. Residue 245–246 participates in NADPH binding; sequence RG.

This sequence belongs to the GTP cyclohydrolase I family. QueF type 2 subfamily. As to quaternary structure, homodimer.

Its subcellular location is the cytoplasm. It catalyses the reaction 7-aminomethyl-7-carbaguanine + 2 NADP(+) = 7-cyano-7-deazaguanine + 2 NADPH + 3 H(+). Its pathway is tRNA modification; tRNA-queuosine biosynthesis. Functionally, catalyzes the NADPH-dependent reduction of 7-cyano-7-deazaguanine (preQ0) to 7-aminomethyl-7-deazaguanine (preQ1). The polypeptide is NADPH-dependent 7-cyano-7-deazaguanine reductase (Xanthomonas campestris pv. campestris (strain B100)).